We begin with the raw amino-acid sequence, 611 residues long: UvrABC system protein C (611 aa).

Positions 19–97 (QRPGVYRMVD…IKELRPRYNV (79 aa)) constitute a GIY-YIG domain. The UVR domain occupies 207 to 242 (NQVIEELGARMEAASERLEFEAAAQYRDRIQALQAV).

It belongs to the UvrC family. As to quaternary structure, interacts with UvrB in an incision complex.

It is found in the cytoplasm. Functionally, the UvrABC repair system catalyzes the recognition and processing of DNA lesions. UvrC both incises the 5' and 3' sides of the lesion. The N-terminal half is responsible for the 3' incision and the C-terminal half is responsible for the 5' incision. In Alkalilimnicola ehrlichii (strain ATCC BAA-1101 / DSM 17681 / MLHE-1), this protein is UvrABC system protein C.